The primary structure comprises 333 residues: Ornithine carbamoyltransferase (333 aa).

Residues 56-59 (STRT), Gln-83, Arg-107, and 134-137 (HPTQ) each bind carbamoyl phosphate. Residues Asn-167, Asp-231, and 235–236 (SM) each bind L-ornithine. Carbamoyl phosphate is bound by residues 273 to 274 (CL) and Arg-318.

The protein belongs to the aspartate/ornithine carbamoyltransferase superfamily. OTCase family.

It is found in the cytoplasm. It carries out the reaction carbamoyl phosphate + L-ornithine = L-citrulline + phosphate + H(+). It participates in amino-acid biosynthesis; L-arginine biosynthesis; L-arginine from L-ornithine and carbamoyl phosphate: step 1/3. In terms of biological role, reversibly catalyzes the transfer of the carbamoyl group from carbamoyl phosphate (CP) to the N(epsilon) atom of ornithine (ORN) to produce L-citrulline. In Staphylococcus aureus (strain Mu50 / ATCC 700699), this protein is Ornithine carbamoyltransferase (argF).